Here is a 230-residue protein sequence, read N- to C-terminus: Large ribosomal subunit protein uL1 (230 aa).

Belongs to the universal ribosomal protein uL1 family. Part of the 50S ribosomal subunit.

Functionally, binds directly to 23S rRNA. The L1 stalk is quite mobile in the ribosome, and is involved in E site tRNA release. Its function is as follows. Protein L1 is also a translational repressor protein, it controls the translation of the L11 operon by binding to its mRNA. This Rubrobacter xylanophilus (strain DSM 9941 / JCM 11954 / NBRC 16129 / PRD-1) protein is Large ribosomal subunit protein uL1.